A 171-amino-acid chain; its full sequence is Serine acetyltransferase (171 aa).

It belongs to the transferase hexapeptide repeat family.

It is found in the cytoplasm. It catalyses the reaction L-serine + acetyl-CoA = O-acetyl-L-serine + CoA. Its pathway is amino-acid biosynthesis; L-cysteine biosynthesis; L-cysteine from L-serine: step 1/2. The protein is Serine acetyltransferase (cysE) of Helicobacter pylori (strain J99 / ATCC 700824) (Campylobacter pylori J99).